The chain runs to 79 residues: UPF0154 protein llmg_1186 (79 aa).

A helical transmembrane segment spans residues Ile-4–Phe-24.

The protein belongs to the UPF0154 family.

It localises to the cell membrane. This chain is UPF0154 protein llmg_1186, found in Lactococcus lactis subsp. cremoris (strain MG1363).